The primary structure comprises 493 residues: Dipeptide permease D (493 aa).

At 1 to 13 (MNKHASQPRAIYY) the chain is on the cytoplasmic side. Residues 14 to 34 (VVALQIWEYFSFYGMRALLIL) form a helical membrane-spanning segment. The Periplasmic portion of the chain corresponds to 35 to 48 (YLTNQLKYNDTHAY). Residues 49-69 (ELFSAYCSLVYVTPILGGFLA) form a helical membrane-spanning segment. At 70-77 (DKVLGNRM) the chain is on the cytoplasmic side. Residues 78-98 (AVMLGALLMAIGHVVLGASEI) form a helical membrane-spanning segment. The Periplasmic segment spans residues 99–100 (HP). Residues 101–121 (SFLYLSLAIIVCGYGLFKSNV) form a helical membrane-spanning segment. The Cytoplasmic portion of the chain corresponds to 122–137 (SCLLGELYEPTDPRRD). The chain crosses the membrane as a helical span at residues 138–158 (GGFSLMYAAGNVGSIIAPIAC). The Periplasmic segment spans residues 159 to 166 (GYAQEEYS). Residues 167–187 (WAMGFGLAAVGMIAGLVIFLC) traverse the membrane as a helical segment. Residues 188 to 211 (GNRHFTHTRGVNKKVLRATNFLLP) are Cytoplasmic-facing. The helical transmembrane segment at 212–232 (NWGWLLVLLVATPALITILFW) threads the bilayer. At 233 to 234 (KE) the chain is on the periplasmic side. The chain crosses the membrane as a helical span at residues 235-255 (WSVYALIVATIIGLGVLAKIY). Over 256–266 (RKAENQKQRKE) the chain is Cytoplasmic. The chain crosses the membrane as a helical span at residues 267–287 (LGLIVTLTFFSMLFWAFAQQG). Residues 288–311 (GSSISLYIDRFVNRDMFGYTVPTA) lie on the Periplasmic side of the membrane. A helical transmembrane segment spans residues 312 to 332 (MFQSINAFAVMLCGVFLAWVV). The Cytoplasmic segment spans residues 333-343 (KESVAGNRTVR). Residues 344-364 (IWGKFALGLGLMSAGFCILTL) traverse the membrane as a helical segment. Topologically, residues 365-378 (SARWSAMYGHSSLP) are periplasmic. The chain crosses the membrane as a helical span at residues 379 to 399 (LMVLGLAVMGFAELFIDPVAM). At 400-412 (SQITRIEIPGVTG) the chain is on the cytoplasmic side. Residues 413-433 (VLTGIYMLLSGAIANYLAGVI) traverse the membrane as a helical segment. Over 434–461 (ADQTSQASFDASGAINYSINAYIEVFDQ) the chain is Periplasmic. The helical transmembrane segment at 462–482 (ITWGALACVGLVLMIWLYQAL) threads the bilayer. At 483-493 (KFRNRALALES) the chain is on the cytoplasmic side.

It belongs to the major facilitator superfamily. Proton-dependent oligopeptide transporter (POT/PTR) (TC 2.A.17) family. DtpD subfamily.

It localises to the cell inner membrane. Its function is as follows. Probable proton-dependent permease that transports dipeptides. This is Dipeptide permease D (dtpD) from Escherichia coli (strain K12).